The chain runs to 104 residues: Large ribosomal subunit protein uL24 (104 aa).

The protein belongs to the universal ribosomal protein uL24 family. Part of the 50S ribosomal subunit.

One of two assembly initiator proteins, it binds directly to the 5'-end of the 23S rRNA, where it nucleates assembly of the 50S subunit. Its function is as follows. One of the proteins that surrounds the polypeptide exit tunnel on the outside of the subunit. This is Large ribosomal subunit protein uL24 from Anaplasma phagocytophilum (strain HZ).